The primary structure comprises 2167 residues: SH3 and multiple ankyrin repeat domains protein 1 (2167 aa).

Residues 1-63 (MTHSPATSED…TRGLQGRSMS (63 aa)) are disordered. Residues 17 to 32 (SECPEGGSESDSSPDG) show a composition bias toward low complexity. The segment covering 33–47 (PGRGPQGTRGRGSGA) has biased composition (gly residues). Arg-43 carries the omega-N-methylarginine modification. At Tyr-186 the chain carries Phosphotyrosine. 7 ANK repeats span residues 195–210 (VARLLDKGLDPNYHDS), 212–245 (SGETPLTLAAQTEGSVEVIRTLCLGGAHIDFRAR), 246–278 (DGMTALHKAACARHCLALTALLDLGGSPNYKDR), 279–312 (RGLTPLFHTAMVGGDPRCCELLLYNRAQLGIADE), 313–345 (NGWQEIHQACQRGHSQHLEHLLFYGAEPGAQNA), 346–378 (SGNTALHICALYNKETCARILLYRGANKDVKNN), and 379–395 (NGQTPFQVAVIAGNFEL). Disordered stretches follow at residues 413-432 (SPKYAARRRGPPGAGLTVPP) and 453-546 (APGA…SRGR). Residues 453-479 (APGASSSGTPGPTSGPQGQSQPSAPST) show a composition bias toward low complexity. The span at 527-542 (PAGGTGGSGGPGGSLG) shows a compositional bias: gly residues. Ser-540 bears the Phosphoserine mark. Arg-544 carries the omega-N-methylarginine modification. Positions 554–613 (VPGRSFMAVKSYQAQGEGEISLSKGEKIKVLSIGEGGFWEGQVKGRVGWFPSDCLEEVAN) constitute an SH3 domain. Ser-638, Ser-641, Ser-671, and Ser-791 each carry phosphoserine. A PDZ domain is found at 663-757 (TVLLQKKDSE…TLMVKVVMVT (95 aa)). The interval 841–894 (ISASESPGPGGLASLGKHRPKGFFATESSFDPHHRSQPSYDRPSFLPPGPGLML) is disordered. Ser-898 is modified (phosphoserine). Disordered stretches follow at residues 917–1233 (SRSL…LDFT), 1245–1294 (RREG…SIDE), 1308–1417 (GGSS…VLRL), 1429–1725 (RAGL…AGVA), 1740–1787 (GQAF…DPVT), 1842–1866 (KLLPWEEGPGPPPPPLPGPLSQPQA), 1898–1988 (PWAR…STRH), and 2002–2029 (RRAPSPSLLPASDHKVSPAPRPSSLPIL). Residues 928-947 (IPPPPTTSPPEPPYSTPPAP) are compositionally biased toward pro residues. Arg-958 bears the Omega-N-methylarginine mark. Positions 964–980 (PSSGGPLPASSPSSFDG) are enriched in low complexity. Residues 1004–1028 (AHHHPPHHHHHHAPPPQPHHHHAHP) show a composition bias toward basic residues. Arg-1059 bears the Omega-N-methylarginine mark. Low complexity predominate over residues 1064–1085 (SPTSGAPSPSHHSSSGGSSGPT). 2 positions are modified to omega-N-methylarginine: Arg-1098 and Arg-1109. 2 stretches are compositionally biased toward low complexity: residues 1132–1146 (SIPSASSPTSPALPR) and 1171–1184 (STSSSGRSSQGSST). The span at 1203–1224 (SPAPATSPVPPSPSPVPTPASP) shows a compositional bias: pro residues. Over residues 1245–1256 (RREGGWQNEARR) the composition is skewed to basic and acidic residues. Arg-1257 bears the Asymmetric dimethylarginine mark. At Ser-1291 the chain carries Phosphoserine. Over residues 1363-1372 (ARERALKESS) the composition is skewed to basic and acidic residues. Pro residues predominate over residues 1378-1395 (PQPPPRPPSPRYDAPPPT). Residues 1396-1408 (LHHHSPHSPHSPH) are compositionally biased toward basic residues. Residue Arg-1429 is modified to Omega-N-methylarginine. The residue at position 1442 (Ser-1442) is a Phosphoserine. Low complexity-rich tracts occupy residues 1459-1469 (PGVGPLLLQLG) and 1530-1541 (RRVLPTSPTSPR). A compositionally biased stretch (pro residues) spans 1589–1615 (PLTPGPPHPLPDPPSPATPLPAAPPPA). Positions 1624-1641 (DSTASSLTSYDSEVATLT) are enriched in polar residues. The span at 1648-1676 (PGDPPAPGPPAPAAPAPPAPQPGPDPPPG) shows a compositional bias: pro residues. Over residues 1684–1694 (VDSRSSSDHPL) the composition is skewed to basic and acidic residues. Residues 1695–1708 (ETISSASTLSSLSA) show a composition bias toward low complexity. Residues 1709–1724 (EGGGNTGGVAGGGAGV) show a composition bias toward gly residues. A compositionally biased stretch (pro residues) spans 1850-1861 (PGPPPPPLPGPL). Position 1901 is an omega-N-methylarginine (Arg-1901). Composition is skewed to low complexity over residues 1934 to 1945 (SQTSLLSKPSSS), 1960 to 1985 (TGSGVSSSTAAAPGATSPSASSASAS), and 2002 to 2012 (RRAPSPSLLPA). Omega-N-methylarginine occurs at positions 2022, 2042, and 2080. The SAM domain maps to 2104–2167 (WTKFDVADWL…DRALKFFLER (64 aa)).

Belongs to the SHANK family. As to quaternary structure, may homomultimerize via its SAM domain. Interacts with the C-terminus of SSTR2 via the PDZ domain. Interacts with SHARPIN, SPTAN1 and DLGAP1/GKAP. Part of a complex with DLG4/PSD-95 and DLGAP1/GKAP. Interacts with BAIAP2. Interacts with IGSF9. Interacts with HOMER1 and HOMER3. As to expression, expressed only in brain (neuropil of cortex, CA1 region hippocampus and molecular layer of cerebellum).

Its subcellular location is the cytoplasm. The protein localises to the synapse. It localises to the postsynaptic density. Functionally, seems to be an adapter protein in the postsynaptic density (PSD) of excitatory synapses that interconnects receptors of the postsynaptic membrane including NMDA-type and metabotropic glutamate receptors, and the actin-based cytoskeleton. Plays a role in the structural and functional organization of the dendritic spine and synaptic junction. Overexpression promotes maturation of dendritic spines and the enlargement of spine heads via its ability to recruit Homer to postsynaptic sites, and enhances presynaptic function. This chain is SH3 and multiple ankyrin repeat domains protein 1 (Shank1), found in Rattus norvegicus (Rat).